Here is a 1433-residue protein sequence, read N- to C-terminus: MGARASVLTGGKLDAWEKIRLRPGGRKSYKIKHLVWASRELERFALNPDLLETAEGCQQIMRQLQPSLQTGTEEIKSLYNAVATLYCVHQRIEVKDTKEALEEVEKIQKKSQEKIQQAAMDKGNSNQVSQNYPIVQNAQGQMVHQAITPRTLNAWVKVVEEKAFSPEVIPMFSALSEGATPQDLNLMLNTVGGHQAAMQMLKDTINEEAAEWDRMHPQQAGPFPPGQIREPRGSDIAGTTSSLQEQITWMTGNPPIPVGEIYKRWIILGLNKIVRMYSPVSILDIRQGPKEPFRDYVDRFFKCLRAEQASQDVKGWMTDTLLVQNANPDCKTILRALGQGASLEEMMTACQGVGGPSHKARVLAEAMSQASGAAAAIMMQRSNFKGPRRTIKCFNCGKEGHLARNCRAPRKKGCWKCGKEGHQMKDCTERQANFFRENLAFQQGEAREFSSEQDRTNSPTCRKPRVRRGDSPLPEAGDEGKGAISLPQITLWQRPLVTVKIGGQLIEALLDTGADDTVLEEINLPGRWKPKMIGGIGGFIKVRQYDQVPIEISGKKAIGTILVGPTPINIIGRNMLTQIGCTLNFPISPIETVPVKLKPGMDGPRVKQWPLTEEKIKALTEICKEMEEEGKISKIGPENPYNTPIFAIKKKDSTKWRKLVDFRELNKRTQDFWEVQLGIPHPAGLKKKKSVTVLDVGDAYFSVPLDEDFRKYTAFTIPSINNETPGVRYQYNVLPQGWKGSPAIFQSSMTRILEPFRANNPEMVIYQYMDDLYVGSDLEIGQHRAKIEELREHLLKWGFTTPDKKHQKEPPFLWMGYELHPDKWTVQPIQLPDKESWTVNDIQKLVGKLNWASQIYPGIKVTHLCKLLRGAKALTDIVSLTAEAEMELAENREILREPVHGVYYDPSKELIAEVQKQGLDQWTYQIYQEPYKNLKTGKYAKRGSAHTNDVKQLTEVVQKIATESIVIWGKTPKFKLPIRKETWEIWWTDYWQATWIPEWEFVNTPPLVKLWYRLETEPIPGAETYYVDGAANRETKLGKAGYVTDKGKQKIITLTETTNQKAELQAIQLALQDSRSEVNIVTDSQYALGIIQAQPDRSEAELVNQIIEQLIKKEKVYLSWVPAHKGIGGNEQVDKLVSSGIRKVLFLDGIDKAQEEHERYHNNWRAMASDFNLPPIVAKEIVASCDKCQLKGEAMHGQVDCSPGIWQLDCTHLEGKIIIVAVHVASGYIEAEVIPAETGQETAYFILKLAGRWPVTVIHTDNGSNFTSAAVKAACWWANITQEFGIPYNPQSQGVVESMNKELKKIIGQVRDQAEHLKTAVQMAVFIHNFKRKGGIGGYSAGERIIDIIASDIQTKELQKQITKIQNFRVYYRDSRDPVWKGPAKLLWKGEGAVVIQDNNEIKVVPRRKAKIIRDYGKQMAGDDCVAGRQDED.

Gly-2 carries N-myristoyl glycine; by host lipidation. Residues 7–31 (VLTGGKLDAWEKIRLRPGGRKSYKI) are interaction with Gp41. The interval 8-43 (LTGGKLDAWEKIRLRPGGRKSYKIKHLVWASRELER) is interaction with host CALM1. The tract at residues 12 to 19 (KLDAWEKI) is interaction with host AP3D1. Residues 14-33 (DAWEKIRLRPGGRKSYKIKH) are interaction with membrane phosphatidylinositol 4,5-bisphosphate and RNA. Positions 16–22 (WEKIRLR) match the Nuclear export signal motif. A Nuclear localization signal motif is present at residues 26 to 32 (RKSYKIK). The interval 73 to 77 (EEIKS) is interaction with membrane phosphatidylinositol 4,5-bisphosphate. The residue at position 132 (Tyr-132) is a Phosphotyrosine; by host. Residues 189–227 (NTVGGHQAAMQMLKDTINEEAAEWDRMHPQQAGPFPPGQ) form an interaction with human PPIA/CYPA and NUP153 region. The dimerization/Multimerization of capsid protein p24 stretch occupies residues 277–363 (YSPVSILDIR…GGPSHKARVL (87 aa)). 2 CCHC-type zinc fingers span residues 391 to 408 (IKCF…NCRA) and 412 to 429 (KGCW…DCTE). A compositionally biased stretch (basic and acidic residues) spans 445 to 455 (EAREFSSEQDR). The interval 445–481 (EAREFSSEQDRTNSPTCRKPRVRRGDSPLPEAGDEGK) is disordered. The segment at 487–491 (PQITL) is dimerization of protease. The Peptidase A2 domain maps to 506–575 (IEALLDTGAD…TPINIIGRNM (70 aa)). Asp-511 acts as the For protease activity; shared with dimeric partner in catalysis. Dimerization of protease regions lie at residues 535–541 (GIGGFIK) and 574–586 (NMLT…LNFP). The Reverse transcriptase domain occupies 629-819 (EGKISKIGPE…PPFLWMGYEL (191 aa)). Mg(2+) is bound by residues Asp-695, Asp-770, and Asp-771. The segment at 812 to 820 (FLWMGYELH) is RT 'primer grip'. The Tryptophan repeat motif motif lies at 983-999 (WEIWWTDYWQATWIPEW). Residues 1019–1142 (IPGAETYYVD…VDKLVSSGIR (124 aa)) enclose the RNase H type-1 domain. 4 residues coordinate Mg(2+): Asp-1028, Glu-1063, Asp-1083, and Asp-1134. The Integrase-type zinc finger occupies 1148–1189 (DGIDKAQEEHERYHNNWRAMASDFNLPPIVAKEIVASCDKCQ). 4 residues coordinate Zn(2+): His-1157, His-1161, Cys-1185, and Cys-1188. Residues 1199-1349 (VDCSPGIWQL…SAGERIIDII (151 aa)) enclose the Integrase catalytic domain. Mg(2+)-binding residues include Asp-1209, Asp-1261, and Glu-1297. The integrase-type DNA-binding region spans 1368 to 1415 (FRVYYRDSRDPVWKGPAKLLWKGEGAVVIQDNNEIKVVPRRKAKIIRD).

In terms of assembly, homotrimer; further assembles as hexamers of trimers. Interacts with gp41 (via C-terminus). Interacts with host CALM1; this interaction induces a conformational change in the Matrix protein, triggering exposure of the myristate group. Interacts with host AP3D1; this interaction allows the polyprotein trafficking to multivesicular bodies during virus assembly. Part of the pre-integration complex (PIC) which is composed of viral genome, matrix protein, Vpr and integrase. Homodimer; the homodimer further multimerizes as homohexamers or homopentamers. Interacts with human PPIA/CYPA; This interaction stabilizes the capsid. Interacts with human NUP153. Interacts with host PDZD8; this interaction stabilizes the capsid. Interacts with monkey TRIM5; this interaction destabilizes the capsid. As to quaternary structure, homodimer, whose active site consists of two apposed aspartic acid residues. In terms of assembly, heterodimer of p66 RT and p51 RT (RT p66/p51). Heterodimerization of RT is essential for DNA polymerase activity. The overall folding of the subdomains is similar in p66 RT and p51 RT but the spatial arrangements of the subdomains are dramatically different. Homotetramer; may further associate as a homohexadecamer. Part of the pre-integration complex (PIC) which is composed of viral genome, matrix protein, Vpr and integrase. Interacts with human SMARCB1/INI1 and human PSIP1/LEDGF isoform 1. Interacts with human KPNA3; this interaction might play a role in nuclear import of the pre-integration complex. Interacts with human NUP153; this interaction might play a role in nuclear import of the pre-integration complex. Mg(2+) is required as a cofactor. Post-translationally, specific enzymatic cleavages by the viral protease yield mature proteins. The protease is released by autocatalytic cleavage. The polyprotein is cleaved during and after budding, this process is termed maturation. Proteolytic cleavage of p66 RT removes the RNase H domain to yield the p51 RT subunit. Nucleocapsid protein p7 might be further cleaved after virus entry. Tyrosine phosphorylated presumably in the virion by a host kinase. Phosphorylation is apparently not a major regulator of membrane association. In terms of processing, phosphorylated possibly by host MAPK1; this phosphorylation is necessary for Pin1-mediated virion uncoating. Post-translationally, methylated by host PRMT6, impairing its function by reducing RNA annealing and the initiation of reverse transcription.

It localises to the host cell membrane. The protein localises to the host endosome. It is found in the host multivesicular body. The protein resides in the virion membrane. Its subcellular location is the host nucleus. It localises to the host cytoplasm. The protein localises to the virion. The enzyme catalyses Specific for a P1 residue that is hydrophobic, and P1' variable, but often Pro.. It carries out the reaction Endohydrolysis of RNA in RNA/DNA hybrids. Three different cleavage modes: 1. sequence-specific internal cleavage of RNA. Human immunodeficiency virus type 1 and Moloney murine leukemia virus enzymes prefer to cleave the RNA strand one nucleotide away from the RNA-DNA junction. 2. RNA 5'-end directed cleavage 13-19 nucleotides from the RNA end. 3. DNA 3'-end directed cleavage 15-20 nucleotides away from the primer terminus.. The catalysed reaction is 3'-end directed exonucleolytic cleavage of viral RNA-DNA hybrid.. It catalyses the reaction DNA(n) + a 2'-deoxyribonucleoside 5'-triphosphate = DNA(n+1) + diphosphate. With respect to regulation, protease: The viral protease is inhibited by many synthetic protease inhibitors (PIs), such as amprenavir, atazanavir, indinavir, loprinavir, nelfinavir, ritonavir and saquinavir. Use of protease inhibitors in tritherapy regimens permit more ambitious therapeutic strategies. Reverse transcriptase/ribonuclease H: RT can be inhibited either by nucleoside RT inhibitors (NRTIs) or by non nucleoside RT inhibitors (NNRTIs). NRTIs act as chain terminators, whereas NNRTIs inhibit DNA polymerization by binding a small hydrophobic pocket near the RT active site and inducing an allosteric change in this region. Classical NRTIs are abacavir, adefovir (PMEA), didanosine (ddI), lamivudine (3TC), stavudine (d4T), tenofovir (PMPA), zalcitabine (ddC), and zidovudine (AZT). Classical NNRTIs are atevirdine (BHAP U-87201E), delavirdine, efavirenz (DMP-266), emivirine (I-EBU), and nevirapine (BI-RG-587). The tritherapies used as a basic effective treatment of AIDS associate two NRTIs and one NNRTI. Functionally, mediates, with Gag polyprotein, the essential events in virion assembly, including binding the plasma membrane, making the protein-protein interactions necessary to create spherical particles, recruiting the viral Env proteins, and packaging the genomic RNA via direct interactions with the RNA packaging sequence (Psi). Gag-Pol polyprotein may regulate its own translation, by the binding genomic RNA in the 5'-UTR. At low concentration, the polyprotein would promote translation, whereas at high concentration, the polyprotein would encapsidate genomic RNA and then shut off translation. Its function is as follows. Targets the polyprotein to the plasma membrane via a multipartite membrane-binding signal, that includes its myristoylated N-terminus. Matrix protein is part of the pre-integration complex. Implicated in the release from host cell mediated by Vpu. Binds to RNA. Forms the conical core that encapsulates the genomic RNA-nucleocapsid complex in the virion. Most core are conical, with only 7% tubular. The core is constituted by capsid protein hexamer subunits. The core is disassembled soon after virion entry. Host restriction factors such as TRIM5-alpha or TRIMCyp bind retroviral capsids and cause premature capsid disassembly, leading to blocks in reverse transcription. Capsid restriction by TRIM5 is one of the factors which restricts HIV-1 to the human species. Host PIN1 apparently facilitates the virion uncoating. On the other hand, interactions with PDZD8 or CYPA stabilize the capsid. In terms of biological role, encapsulates and protects viral dimeric unspliced genomic RNA (gRNA). Binds these RNAs through its zinc fingers. Acts as a nucleic acid chaperone which is involved in rearangement of nucleic acid secondary structure during gRNA retrotranscription. Also facilitates template switch leading to recombination. As part of the polyprotein, participates in gRNA dimerization, packaging, tRNA incorporation and virion assembly. Functionally, aspartyl protease that mediates proteolytic cleavages of Gag and Gag-Pol polyproteins during or shortly after the release of the virion from the plasma membrane. Cleavages take place as an ordered, step-wise cascade to yield mature proteins. This process is called maturation. Displays maximal activity during the budding process just prior to particle release from the cell. Also cleaves Nef and Vif, probably concomitantly with viral structural proteins on maturation of virus particles. Hydrolyzes host EIF4GI and PABP1 in order to shut off the capped cellular mRNA translation. The resulting inhibition of cellular protein synthesis serves to ensure maximal viral gene expression and to evade host immune response. Also mediates cleavage of host YTHDF3. Mediates cleavage of host CARD8, thereby activating the CARD8 inflammasome, leading to the clearance of latent HIV-1 in patient CD4(+) T-cells after viral reactivation; in contrast, HIV-1 can evade CARD8-sensing when its protease remains inactive in infected cells prior to viral budding. Its function is as follows. Multifunctional enzyme that converts the viral RNA genome into dsDNA in the cytoplasm, shortly after virus entry into the cell. This enzyme displays a DNA polymerase activity that can copy either DNA or RNA templates, and a ribonuclease H (RNase H) activity that cleaves the RNA strand of RNA-DNA heteroduplexes in a partially processive 3' to 5' endonucleasic mode. Conversion of viral genomic RNA into dsDNA requires many steps. A tRNA(3)-Lys binds to the primer-binding site (PBS) situated at the 5'-end of the viral RNA. RT uses the 3' end of the tRNA primer to perform a short round of RNA-dependent minus-strand DNA synthesis. The reading proceeds through the U5 region and ends after the repeated (R) region which is present at both ends of viral RNA. The portion of the RNA-DNA heteroduplex is digested by the RNase H, resulting in a ssDNA product attached to the tRNA primer. This ssDNA/tRNA hybridizes with the identical R region situated at the 3' end of viral RNA. This template exchange, known as minus-strand DNA strong stop transfer, can be either intra- or intermolecular. RT uses the 3' end of this newly synthesized short ssDNA to perform the RNA-dependent minus-strand DNA synthesis of the whole template. RNase H digests the RNA template except for two polypurine tracts (PPTs) situated at the 5'-end and near the center of the genome. It is not clear if both polymerase and RNase H activities are simultaneous. RNase H probably can proceed both in a polymerase-dependent (RNA cut into small fragments by the same RT performing DNA synthesis) and a polymerase-independent mode (cleavage of remaining RNA fragments by free RTs). Secondly, RT performs DNA-directed plus-strand DNA synthesis using the PPTs that have not been removed by RNase H as primers. PPTs and tRNA primers are then removed by RNase H. The 3' and 5' ssDNA PBS regions hybridize to form a circular dsDNA intermediate. Strand displacement synthesis by RT to the PBS and PPT ends produces a blunt ended, linear dsDNA copy of the viral genome that includes long terminal repeats (LTRs) at both ends. Catalyzes viral DNA integration into the host chromosome, by performing a series of DNA cutting and joining reactions. This enzyme activity takes place after virion entry into a cell and reverse transcription of the RNA genome in dsDNA. The first step in the integration process is 3' processing. This step requires a complex comprising the viral genome, matrix protein, Vpr and integrase. This complex is called the pre-integration complex (PIC). The integrase protein removes 2 nucleotides from each 3' end of the viral DNA, leaving recessed CA OH's at the 3' ends. In the second step, the PIC enters cell nucleus. This process is mediated through integrase and Vpr proteins, and allows the virus to infect a non dividing cell. This ability to enter the nucleus is specific of lentiviruses, other retroviruses cannot and rely on cell division to access cell chromosomes. In the third step, termed strand transfer, the integrase protein joins the previously processed 3' ends to the 5' ends of strands of target cellular DNA at the site of integration. The 5'-ends are produced by integrase-catalyzed staggered cuts, 5 bp apart. A Y-shaped, gapped, recombination intermediate results, with the 5'-ends of the viral DNA strands and the 3' ends of target DNA strands remaining unjoined, flanking a gap of 5 bp. The last step is viral DNA integration into host chromosome. This involves host DNA repair synthesis in which the 5 bp gaps between the unjoined strands are filled in and then ligated. Since this process occurs at both cuts flanking the HIV genome, a 5 bp duplication of host DNA is produced at the ends of HIV-1 integration. Alternatively, Integrase may catalyze the excision of viral DNA just after strand transfer, this is termed disintegration. The protein is Gag-Pol polyprotein (gag-pol) of Human immunodeficiency virus type 1 group M subtype G (isolate SE6165) (HIV-1).